The chain runs to 283 residues: Large ribosomal subunit protein uL2 (283 aa).

Disordered stretches follow at residues 1–59 (MSIK…GGHK) and 222–283 (RGVA…TGGQ).

The protein belongs to the universal ribosomal protein uL2 family. As to quaternary structure, part of the 50S ribosomal subunit. Forms a bridge to the 30S subunit in the 70S ribosome.

Its function is as follows. One of the primary rRNA binding proteins. Required for association of the 30S and 50S subunits to form the 70S ribosome, for tRNA binding and peptide bond formation. It has been suggested to have peptidyltransferase activity; this is somewhat controversial. Makes several contacts with the 16S rRNA in the 70S ribosome. The chain is Large ribosomal subunit protein uL2 from Salinibacter ruber (strain DSM 13855 / M31).